The sequence spans 1159 residues: WASH complex subunit 5 (1159 aa).

Belongs to the strumpellin family. In terms of assembly, component of the WASH complex.

It localises to the early endosome. Its function is as follows. Acts at least in part as component of the WASH complex which seems to regulate washc1 nucleation-promoting factor (NPF) activity and is required for its membrane targeting during endosomal sorting. The sequence is that of WASH complex subunit 5 from Xenopus tropicalis (Western clawed frog).